Reading from the N-terminus, the 274-residue chain is tRNA pseudouridine synthase A (274 aa).

Catalysis depends on D54, which acts as the Nucleophile. Y112 serves as a coordination point for substrate.

It belongs to the tRNA pseudouridine synthase TruA family. In terms of assembly, homodimer.

It carries out the reaction uridine(38/39/40) in tRNA = pseudouridine(38/39/40) in tRNA. Its function is as follows. Formation of pseudouridine at positions 38, 39 and 40 in the anticodon stem and loop of transfer RNAs. The sequence is that of tRNA pseudouridine synthase A from Solidesulfovibrio magneticus (strain ATCC 700980 / DSM 13731 / RS-1) (Desulfovibrio magneticus).